We begin with the raw amino-acid sequence, 300 residues long: Alpha-tubulin N-acetyltransferase 1 (300 aa).

The region spanning 1–190 is the N-acetyltransferase domain; it reads MEFPFDVDAL…NNFVIFEGFF (190 aa). At Lys-56 the chain carries N6-acetyllysine; by autocatalysis. Residue 124-137 participates in acetyl-CoA binding; sequence FYIHESLQRHGHGR. Position 146 is an N6-acetyllysine; by autocatalysis (Lys-146). 160 to 169 lines the acetyl-CoA pocket; that stretch reads SQKLLKFLNK. 2 positions are modified to N6-acetyllysine; by autocatalysis: Lys-210 and Lys-221. Disordered regions lie at residues 229 to 263 and 280 to 300; these read PLNR…RPFV and TARL…RRTR. Phosphoserine occurs at positions 249 and 253. Arg-282 is modified (asymmetric dimethylarginine). Ser-292 bears the Phosphoserine mark. Position 300 is an omega-N-methylarginine (Arg-300).

This sequence belongs to the acetyltransferase ATAT1 family. Component of the BBSome complex. Interacts with AP2 alpha-adaptins, including AP2A2, but not with AP1 gamma-adaptin (AP1G1/AP1G2); this interaction is required for efficient alpha-tubulin acetylation, hence clathrin-coated pits are sites of microtubule acetylation. Autoacetylation strongly increases tubulin acetylation.

It localises to the cytoplasm. It is found in the membrane. The protein resides in the clathrin-coated pit. Its subcellular location is the cell junction. The protein localises to the focal adhesion. It localises to the cell projection. It is found in the axon. The protein resides in the cytoskeleton. Its subcellular location is the spindle. It catalyses the reaction L-lysyl-[alpha-tubulin] + acetyl-CoA = N(6)-acetyl-L-lysyl-[alpha-tubulin] + CoA + H(+). Functionally, specifically acetylates 'Lys-40' in alpha-tubulin on the lumenal side of microtubules. Promotes microtubule destabilization and accelerates microtubule dynamics; this activity may be independent of acetylation activity. Acetylates alpha-tubulin with a slow enzymatic rate, due to a catalytic site that is not optimized for acetyl transfer. Enters the microtubule through each end and diffuses quickly throughout the lumen of microtubules. Acetylates only long/old microtubules because of its slow acetylation rate since it does not have time to act on dynamically unstable microtubules before the enzyme is released. Required for normal sperm flagellar function. Promotes directional cell locomotion and chemotaxis, through AP2A2-dependent acetylation of alpha-tubulin at clathrin-coated pits that are concentrated at the leading edge of migrating cells. May facilitate primary cilium assembly. This Sus scrofa (Pig) protein is Alpha-tubulin N-acetyltransferase 1.